We begin with the raw amino-acid sequence, 453 residues long: tRNA-2-methylthio-N(6)-dimethylallyladenosine synthase (453 aa).

The MTTase N-terminal domain occupies 4–118 (KKFYIENYGC…IPNLINNFFK (115 aa)). The [4Fe-4S] cluster site is built by C13, C49, C83, C156, C160, and C163. Positions 142–388 (EEKKITAFVT…NLQKTHSYYR (247 aa)) constitute a Radical SAM core domain. The 64-residue stretch at 390–453 (RKYIGSIQDI…SATLVGDIYV (64 aa)) folds into the TRAM domain.

The protein belongs to the methylthiotransferase family. MiaB subfamily. As to quaternary structure, monomer. Requires [4Fe-4S] cluster as cofactor.

Its subcellular location is the cytoplasm. It catalyses the reaction N(6)-dimethylallyladenosine(37) in tRNA + (sulfur carrier)-SH + AH2 + 2 S-adenosyl-L-methionine = 2-methylsulfanyl-N(6)-dimethylallyladenosine(37) in tRNA + (sulfur carrier)-H + 5'-deoxyadenosine + L-methionine + A + S-adenosyl-L-homocysteine + 2 H(+). In terms of biological role, catalyzes the methylthiolation of N6-(dimethylallyl)adenosine (i(6)A), leading to the formation of 2-methylthio-N6-(dimethylallyl)adenosine (ms(2)i(6)A) at position 37 in tRNAs that read codons beginning with uridine. In Karelsulcia muelleri (strain GWSS) (Sulcia muelleri), this protein is tRNA-2-methylthio-N(6)-dimethylallyladenosine synthase.